Consider the following 180-residue polypeptide: ATP-dependent protease subunit HslV (180 aa).

Thr-5 is a catalytic residue. Na(+)-binding residues include Gly-161, Cys-164, and Thr-167.

Belongs to the peptidase T1B family. HslV subfamily. In terms of assembly, a double ring-shaped homohexamer of HslV is capped on each side by a ring-shaped HslU homohexamer. The assembly of the HslU/HslV complex is dependent on binding of ATP.

It localises to the cytoplasm. It carries out the reaction ATP-dependent cleavage of peptide bonds with broad specificity.. Allosterically activated by HslU binding. Its function is as follows. Protease subunit of a proteasome-like degradation complex believed to be a general protein degrading machinery. The protein is ATP-dependent protease subunit HslV of Campylobacter lari (strain RM2100 / D67 / ATCC BAA-1060).